A 346-amino-acid polypeptide reads, in one-letter code: Tetraacyldisaccharide 4'-kinase (346 aa).

Residue 53-60 (TCGGTGKT) coordinates ATP.

It belongs to the LpxK family.

The enzyme catalyses a lipid A disaccharide + ATP = a lipid IVA + ADP + H(+). Its pathway is glycolipid biosynthesis; lipid IV(A) biosynthesis; lipid IV(A) from (3R)-3-hydroxytetradecanoyl-[acyl-carrier-protein] and UDP-N-acetyl-alpha-D-glucosamine: step 6/6. In terms of biological role, transfers the gamma-phosphate of ATP to the 4'-position of a tetraacyldisaccharide 1-phosphate intermediate (termed DS-1-P) to form tetraacyldisaccharide 1,4'-bis-phosphate (lipid IVA). This Bartonella tribocorum (strain CIP 105476 / IBS 506) protein is Tetraacyldisaccharide 4'-kinase.